The following is a 642-amino-acid chain: Bifunctional protein glk (642 aa).

The glucokinase stretch occupies residues 1-340; it reads MSTGAQSKAA…QLSNRSGGAS (340 aa). 23–28 is a binding site for ATP; sequence ADVGGT. The HTH rpiR-type domain occupies 341–417; it reads SAVFERIRQM…LKLATGLTGT (77 aa). A putative HTH-type transcriptional regulator region spans residues 341-642; the sequence is SAVFERIRQM…SPAAKDVARD (302 aa). The segment at residues 377 to 396 is a DNA-binding region (H-T-H motif); sequence IVDIARKADVSQPTVIRFCR. The SIS domain maps to 461–600; it reads AIEILNGARR…AVGVAIRRAS (140 aa). A helical membrane pass occupies residues 576–596; sequence SMISRILHLLMIDILAVGVAI.

It in the N-terminal section; belongs to the bacterial glucokinase family.

The protein localises to the membrane. The enzyme catalyses D-glucose + ATP = D-glucose 6-phosphate + ADP + H(+). This Burkholderia lata (strain ATCC 17760 / DSM 23089 / LMG 22485 / NCIMB 9086 / R18194 / 383) protein is Bifunctional protein glk (glk).